The sequence spans 141 residues: Hemoglobin subunit alpha-A (141 aa).

In terms of domain architecture, Globin spans 1–141 (VLSPADKSNV…VGTVLTAKYR (141 aa)). O2 is bound at residue H58. H87 provides a ligand contact to heme b.

This sequence belongs to the globin family. In terms of assembly, heterotetramer of two alpha chains and two beta chains. In terms of tissue distribution, red blood cells.

Its function is as follows. Involved in oxygen transport from the lung to the various peripheral tissues. This Passer montanus (Eurasian tree sparrow) protein is Hemoglobin subunit alpha-A (HBAA).